Reading from the N-terminus, the 95-residue chain is Aspartyl/glutamyl-tRNA(Asn/Gln) amidotransferase subunit C (95 aa).

The protein belongs to the GatC family. In terms of assembly, heterotrimer of A, B and C subunits.

The catalysed reaction is L-glutamyl-tRNA(Gln) + L-glutamine + ATP + H2O = L-glutaminyl-tRNA(Gln) + L-glutamate + ADP + phosphate + H(+). It carries out the reaction L-aspartyl-tRNA(Asn) + L-glutamine + ATP + H2O = L-asparaginyl-tRNA(Asn) + L-glutamate + ADP + phosphate + 2 H(+). Its function is as follows. Allows the formation of correctly charged Asn-tRNA(Asn) or Gln-tRNA(Gln) through the transamidation of misacylated Asp-tRNA(Asn) or Glu-tRNA(Gln) in organisms which lack either or both of asparaginyl-tRNA or glutaminyl-tRNA synthetases. The reaction takes place in the presence of glutamine and ATP through an activated phospho-Asp-tRNA(Asn) or phospho-Glu-tRNA(Gln). In Allorhizobium ampelinum (strain ATCC BAA-846 / DSM 112012 / S4) (Agrobacterium vitis (strain S4)), this protein is Aspartyl/glutamyl-tRNA(Asn/Gln) amidotransferase subunit C.